Consider the following 158-residue polypeptide: Probable transcription regulator ArfM (158 aa).

Activates, in anaerobic conditions, the transcription of the fermentative operons lctEP and alsDS, of the hmp gene encoding a flavohemoglobin-like protein, the nitrite reductase operon nasDE and the heme biosynthesis genes hemN and hemZ. This Bacillus subtilis (strain 168) protein is Probable transcription regulator ArfM (arfM).